The chain runs to 250 residues: MTALLSPDQLEADLRAIGARLYHDQHPFHALLHHGKLNRGQVQAWALNRFEYQRCIPLKDAAILARMEDPALRRIWRQRILDHDGNSPSDGGIARWLHLTDALGLPRELVESGRALLPGTRFAVQAYLHFVREKSLLEAIASSLTELFAPNIIGQRVAGMLQHYDFVSPEALAYFEHRLTEAPRDSDFALDYVKQHADTIEKQQLVKAALHFKCSVLWAQLDALHVAYVSPGVVWPDAFVPERDSKRAAA.

The protein belongs to the PqqC family.

It carries out the reaction 6-(2-amino-2-carboxyethyl)-7,8-dioxo-1,2,3,4,7,8-hexahydroquinoline-2,4-dicarboxylate + 3 O2 = pyrroloquinoline quinone + 2 H2O2 + 2 H2O + H(+). It functions in the pathway cofactor biosynthesis; pyrroloquinoline quinone biosynthesis. Ring cyclization and eight-electron oxidation of 3a-(2-amino-2-carboxyethyl)-4,5-dioxo-4,5,6,7,8,9-hexahydroquinoline-7,9-dicarboxylic-acid to PQQ. This Xanthomonas campestris pv. campestris (strain 8004) protein is Pyrroloquinoline-quinone synthase.